A 406-amino-acid polypeptide reads, in one-letter code: Digeranylgeranylglycerophospholipid reductase 2 (406 aa).

Residues glycine 15, glutamate 34, cysteine 45, alanine 46, glycine 48, arginine 99, alanine 123, aspartate 279, glycine 291, and isoleucine 292 each coordinate FAD.

The protein belongs to the geranylgeranyl reductase family. DGGGPL reductase subfamily. Requires FAD as cofactor.

It carries out the reaction a 2,3-bis-O-phytanyl-sn-glycerol 1-phospholipid + 8 oxidized 2[4Fe-4S]-[ferredoxin] = a 2,3-bis-O-(geranylgeranyl)-sn-glycerol 1-phospholipid + 8 reduced 2[4Fe-4S]-[ferredoxin] + 16 H(+). It catalyses the reaction 2,3-bis-O-(phytanyl)-sn-glycerol 1-phosphate + 8 oxidized 2[4Fe-4S]-[ferredoxin] = 2,3-bis-O-(geranylgeranyl)-sn-glycerol 1-phosphate + 8 reduced 2[4Fe-4S]-[ferredoxin] + 16 H(+). The enzyme catalyses a 2,3-bis-O-phytanyl-sn-glycerol 1-phospholipid + 8 A = a 2,3-bis-O-(geranylgeranyl)-sn-glycerol 1-phospholipid + 8 AH2. The catalysed reaction is CDP-2,3-bis-O-(geranylgeranyl)-sn-glycerol + 8 AH2 = CDP-2,3-bis-O-(phytanyl)-sn-glycerol + 8 A. It carries out the reaction archaetidylserine + 8 AH2 = 2,3-bis-O-phytanyl-sn-glycero-3-phospho-L-serine + 8 A. Its pathway is membrane lipid metabolism; glycerophospholipid metabolism. Its function is as follows. Is involved in the reduction of 2,3-digeranylgeranylglycerophospholipids (unsaturated archaeols) into 2,3-diphytanylglycerophospholipids (saturated archaeols) in the biosynthesis of archaeal membrane lipids. Catalyzes the formation of archaetidic acid (2,3-di-O-phytanyl-sn-glyceryl phosphate) from 2,3-di-O-geranylgeranylglyceryl phosphate (DGGGP) via the hydrogenation of each double bond of the isoprenoid chains. Is also probably able to reduce double bonds of geranyl groups in CDP-2,3-bis-O-(geranylgeranyl)-sn-glycerol and archaetidylserine, thus acting at various stages in the biosynthesis of archaeal membrane lipids. In Methanococcoides burtonii (strain DSM 6242 / NBRC 107633 / OCM 468 / ACE-M), this protein is Digeranylgeranylglycerophospholipid reductase 2.